The following is a 60-amino-acid chain: MAVPARHTSKAKKNKRRTHYKLTAPSVKFDETTGDYSRSHRVSLKGYYKGRKIAKANEAK.

Residues 1 to 21 form a disordered region; it reads MAVPARHTSKAKKNKRRTHYK. Basic residues predominate over residues 7–20; sequence HTSKAKKNKRRTHY.

The protein belongs to the bacterial ribosomal protein bL32 family.

The chain is Large ribosomal subunit protein bL32 from Streptococcus equi subsp. zooepidemicus (strain H70).